Here is a 216-residue protein sequence, read N- to C-terminus: N-(5'-phosphoribosyl)anthranilate isomerase (216 aa).

Belongs to the TrpF family.

It carries out the reaction N-(5-phospho-beta-D-ribosyl)anthranilate = 1-(2-carboxyphenylamino)-1-deoxy-D-ribulose 5-phosphate. It participates in amino-acid biosynthesis; L-tryptophan biosynthesis; L-tryptophan from chorismate: step 3/5. This Methanopyrus kandleri (strain AV19 / DSM 6324 / JCM 9639 / NBRC 100938) protein is N-(5'-phosphoribosyl)anthranilate isomerase.